The chain runs to 686 residues: tRNA (guanine(37)-N(1))-methyltransferase (686 aa).

Positions glycine 206–tyrosine 244 are disordered. S-adenosyl-L-methionine is bound by residues histidine 428, aspartate 466 to leucine 467, aspartate 495 to glycine 496, and asparagine 530.

The protein belongs to the class I-like SAM-binding methyltransferase superfamily. TRM5/TYW2 family. Monomer.

Its subcellular location is the mitochondrion matrix. The protein resides in the nucleus. It localises to the cytoplasm. The catalysed reaction is guanosine(37) in tRNA + S-adenosyl-L-methionine = N(1)-methylguanosine(37) in tRNA + S-adenosyl-L-homocysteine + H(+). Functionally, specifically methylates the N1 position of guanosine-37 in various cytoplasmic and mitochondrial tRNAs. Methylation is not dependent on the nature of the nucleoside 5' of the target nucleoside. This is the first step in the biosynthesis of wybutosine (yW), a modified base adjacent to the anticodon of tRNAs and required for accurate decoding. This is tRNA (guanine(37)-N(1))-methyltransferase from Leishmania major.